The following is a 254-amino-acid chain: Type III pantothenate kinase (254 aa).

An ATP-binding site is contributed by 7–14 (DVGNTRLK). Residues Tyr96 and 103–106 (GSDR) contribute to the substrate site. Catalysis depends on Asp105, which acts as the Proton acceptor. Thr133 contacts ATP. Thr183 provides a ligand contact to substrate.

The protein belongs to the type III pantothenate kinase family. In terms of assembly, homodimer. It depends on NH4(+) as a cofactor. The cofactor is K(+).

It is found in the cytoplasm. It carries out the reaction (R)-pantothenate + ATP = (R)-4'-phosphopantothenate + ADP + H(+). Its pathway is cofactor biosynthesis; coenzyme A biosynthesis; CoA from (R)-pantothenate: step 1/5. Catalyzes the phosphorylation of pantothenate (Pan), the first step in CoA biosynthesis. This chain is Type III pantothenate kinase, found in Paracidovorax citrulli (strain AAC00-1) (Acidovorax citrulli).